Reading from the N-terminus, the 95-residue chain is Small ribosomal subunit protein uS19 (95 aa).

The protein belongs to the universal ribosomal protein uS19 family.

Protein S19 forms a complex with S13 that binds strongly to the 16S ribosomal RNA. The sequence is that of Small ribosomal subunit protein uS19 from Roseiflexus castenholzii (strain DSM 13941 / HLO8).